Reading from the N-terminus, the 464-residue chain is NADH dehydrogenase [ubiquinone] flavoprotein 1, mitochondrial (464 aa).

The transit peptide at 1–20 (MLAARRLLGWSLPARVSVRF) directs the protein to the mitochondrion. Lys-81 is modified (N6-acetyllysine; alternate). Lys-81 carries the post-translational modification N6-succinyllysine; alternate. Position 87 to 96 (87 to 96 (GRGGAGFPTG)) interacts with NADH. Lys-104 is modified (N6-acetyllysine). 199–247 (RGAGAYICGEETALIESIEGKQGKPRLKPPFPADVGVFGCPTTVANVET) contacts FMN. Residue Arg-257 is modified to Omega-N-methylarginine. Lys-375 bears the N6-acetyllysine mark. Residues Cys-379, Cys-382, Cys-385, and Cys-425 each contribute to the [4Fe-4S] cluster site.

The protein belongs to the complex I 51 kDa subunit family. As to quaternary structure, core subunit of respiratory chain NADH dehydrogenase (Complex I) which is composed of 45 different subunits. This is a component of the flavoprotein-sulfur (FP) fragment of the enzyme. Interacts with RAB5IF. FMN serves as cofactor. It depends on [4Fe-4S] cluster as a cofactor.

It localises to the mitochondrion inner membrane. It catalyses the reaction a ubiquinone + NADH + 5 H(+)(in) = a ubiquinol + NAD(+) + 4 H(+)(out). Its function is as follows. Core subunit of the mitochondrial membrane respiratory chain NADH dehydrogenase (Complex I) which catalyzes electron transfer from NADH through the respiratory chain, using ubiquinone as an electron acceptor. Part of the peripheral arm of the enzyme, where the electrons from NADH are accepted by flavin mononucleotide (FMN) and then passed along a chain of iron-sulfur clusters by electron tunnelling to the final acceptor ubiquinone. Contains FMN, which is the initial electron acceptor as well as one iron-sulfur cluster. The protein is NADH dehydrogenase [ubiquinone] flavoprotein 1, mitochondrial of Pongo pygmaeus (Bornean orangutan).